A 327-amino-acid chain; its full sequence is DNA-directed RNA polymerase subunit alpha (327 aa).

Residues 1–233 (MQNVLKSFLT…HQLAAFVDLK (233 aa)) are alpha N-terminal domain (alpha-NTD). The interval 247–327 (VNPLLLRPVE…GWPPADLTDQ (81 aa)) is alpha C-terminal domain (alpha-CTD).

This sequence belongs to the RNA polymerase alpha chain family. In terms of assembly, homodimer. The RNAP catalytic core consists of 2 alpha, 1 beta, 1 beta' and 1 omega subunit. When a sigma factor is associated with the core the holoenzyme is formed, which can initiate transcription.

The enzyme catalyses RNA(n) + a ribonucleoside 5'-triphosphate = RNA(n+1) + diphosphate. In terms of biological role, DNA-dependent RNA polymerase catalyzes the transcription of DNA into RNA using the four ribonucleoside triphosphates as substrates. This Coxiella burnetii (strain CbuK_Q154) (Coxiella burnetii (strain Q154)) protein is DNA-directed RNA polymerase subunit alpha.